Reading from the N-terminus, the 603-residue chain is Granule-bound starch synthase 1, chloroplastic/amyloplastic (603 aa).

The N-terminal 75 residues, 1–75 (MATITGSSMP…SEKSLGKIVC (75 aa)), are a transit peptide targeting the chloroplast. Lys-91 serves as a coordination point for ADP-alpha-D-glucose.

Belongs to the glycosyltransferase 1 family. Bacterial/plant glycogen synthase subfamily. In terms of tissue distribution, expressed in pods and leaves. No expression in flowers or stipules.

Its subcellular location is the plastid. It localises to the chloroplast. It is found in the amyloplast. It catalyses the reaction an NDP-alpha-D-glucose + [(1-&gt;4)-alpha-D-glucosyl](n) = [(1-&gt;4)-alpha-D-glucosyl](n+1) + a ribonucleoside 5'-diphosphate + H(+). It functions in the pathway glycan biosynthesis; starch biosynthesis. Its function is as follows. May be responsible for the synthesis of amylose. The sequence is that of Granule-bound starch synthase 1, chloroplastic/amyloplastic from Pisum sativum (Garden pea).